The sequence spans 421 residues: Testin (421 aa).

Positions 92–199 (MILTNPVAAK…GDVKLPREMD (108 aa)) constitute a PET domain. A disordered region spans residues 133 to 164 (EKQPVAGSEGAQYRKKQLAKQLPAHDQDPSKC). Residues 155–164 (PAHDQDPSKC) are compositionally biased toward basic and acidic residues. LIM zinc-binding domains follow at residues 234 to 297 (YSCY…CDSE), 299 to 359 (PRCA…NHAV), and 362 to 421 (QGCH…KMMS).

The protein belongs to the prickle / espinas / testin family. Interacts via LIM domain 1 with ZYX. Interacts (via LIM domain 3) with ENAH and VASP. Interacts with ALKBH4, talin, actin, alpha-actinin, GRIP1 and PXN. Interacts (via LIM domain 2) with ACTL7A (via N-terminus). Heterodimer with ACTL7A; the heterodimer interacts with ENAH to form a heterotrimer.

It is found in the cytoplasm. Its subcellular location is the cell junction. The protein resides in the focal adhesion. Scaffold protein that may play a role in cell adhesion, cell spreading and in the reorganization of the actin cytoskeleton. Plays a role in the regulation of cell proliferation. May act as a tumor suppressor. This chain is Testin (TES), found in Neofelis nebulosa (Clouded leopard).